A 244-amino-acid chain; its full sequence is Transcriptional activator protein anr (244 aa).

A nucleoside 3',5'-cyclic phosphate is bound at residue 21–149 (APLCLPLSLT…RLMSREIRDD (129 aa)). The 74-residue stretch at 159 to 232 (KTADERIATF…GKEVHILDSI (74 aa)) folds into the HTH crp-type domain. Positions 192–211 (RNEIGNYLGLAVETVSRVFT) form a DNA-binding region, H-T-H motif.

Functionally, transcriptional activator of anaerobic gene expression. This is Transcriptional activator protein anr (anr) from Pseudomonas aeruginosa (strain ATCC 15692 / DSM 22644 / CIP 104116 / JCM 14847 / LMG 12228 / 1C / PRS 101 / PAO1).